Here is a 334-residue protein sequence, read N- to C-terminus: MATVQQKLITPVSQERSDASRNKVTVVGVGQVGMACAVSILLRELTDEIALVDVLEDKLKGEMMDLLHGSLFLKTPKIMANKDYGITANSRVVVVTAGARQQEGESRLNLVQRNVNIFKFIIPQIVKYSPNCTIIVVSNPVDILTYVTWKISGFPKNRVIGSGCNLDSARFRYLMAEKLGLHPSSCHGWVLGEHGDSSVPVWSGVNVAGVGLQQLNPDIGTAQDKENWKDVHKMVVESAYEVIKLKGYTNWAIGLSVAELTESMVKNLKRVHPVSTMVKGMYGIENEVFLSLPCVLSADGLIDVINQMLKDDEVAQLRKSAETLWNIQKELKDL.

NAD(+) is bound by residues 30-58 (GQVG…LEDK) and arginine 100. Substrate-binding residues include arginine 107, asparagine 139, and arginine 170. Asparagine 139 provides a ligand contact to NAD(+). Histidine 194 serves as the catalytic Proton acceptor. A substrate-binding site is contributed by threonine 249.

The protein belongs to the LDH/MDH superfamily. LDH family. In terms of assembly, homotetramer.

The protein resides in the cytoplasm. The enzyme catalyses (S)-lactate + NAD(+) = pyruvate + NADH + H(+). It participates in fermentation; pyruvate fermentation to lactate; (S)-lactate from pyruvate: step 1/1. In terms of biological role, interconverts simultaneously and stereospecifically pyruvate and lactate with concomitant interconversion of NADH and NAD(+). The polypeptide is L-lactate dehydrogenase B chain (ldhb) (Squalus acanthias (Spiny dogfish)).